Consider the following 395-residue polypeptide: Enolase (395 aa).

Residues His136 and Glu145 each contribute to the substrate site. The Proton donor role is filled by Glu188. Residues Asp223, Glu271, and Asp296 each coordinate Mg(2+). The substrate site is built by Glu271 and Asp296. Catalysis depends on Lys321, which acts as the Proton acceptor. Substrate contacts are provided by residues 348-351 (SHRS) and Lys372.

It belongs to the enolase family. In terms of assembly, homodimer. Mg(2+) is required as a cofactor.

It localises to the cytoplasm. It carries out the reaction (2R)-2-phosphoglycerate = phosphoenolpyruvate + H2O. Its pathway is carbohydrate degradation; glycolysis; pyruvate from D-glyceraldehyde 3-phosphate: step 4/5. The chain is Enolase from Alligator mississippiensis (American alligator).